The primary structure comprises 246 residues: Probable transcriptional regulatory protein APJL_1171 (246 aa).

The protein belongs to the TACO1 family.

Its subcellular location is the cytoplasm. In Actinobacillus pleuropneumoniae serotype 3 (strain JL03), this protein is Probable transcriptional regulatory protein APJL_1171.